Consider the following 710-residue polypeptide: Polyribonucleotide nucleotidyltransferase (710 aa).

Mg(2+)-binding residues include aspartate 489 and aspartate 495. Residues 556–615 (PKIDTIKIDVDKIKVVIGKGGETIDKIIAETGVKIDIDDEGNVSIYSSDQAAINRTKEII) enclose the KH domain. The region spanning 625–693 (GEVYHAKVVR…EKGRVDASMK (69 aa)) is the S1 motif domain. A disordered region spans residues 691–710 (SMKALIPRPPKPEKKEEKHD). A compositionally biased stretch (basic and acidic residues) spans 700–710 (PKPEKKEEKHD).

It depends on Mg(2+) as a cofactor.

It is found in the cytoplasm. The catalysed reaction is RNA(n+1) + phosphate = RNA(n) + a ribonucleoside 5'-diphosphate. Involved in mRNA degradation. Catalyzes the phosphorolysis of single-stranded polyribonucleotides processively in the 3'- to 5'-direction. The sequence is that of Polyribonucleotide nucleotidyltransferase from Streptococcus pyogenes serotype M6 (strain ATCC BAA-946 / MGAS10394).